An 848-amino-acid chain; its full sequence is Beta-galactosidase 11 (848 aa).

A signal peptide spans 1 to 23 (MSAAAVLAVVAAAVAALAAAASG). N-linked (GlcNAc...) asparagine glycosylation occurs at asparagine 29. Residue glutamate 189 is the Proton donor of the active site. The active-site Nucleophile is the glutamate 260. N-linked (GlcNAc...) asparagine glycosylation is found at asparagine 261, asparagine 472, and asparagine 783. The SUEL-type lectin domain occupies 750–837 (GGLKPTAVLS…GTLAVQAKCS (88 aa)).

It belongs to the glycosyl hydrolase 35 family.

The protein localises to the secreted. It localises to the extracellular space. Its subcellular location is the apoplast. It carries out the reaction Hydrolysis of terminal non-reducing beta-D-galactose residues in beta-D-galactosides.. The chain is Beta-galactosidase 11 from Oryza sativa subsp. japonica (Rice).